A 252-amino-acid chain; its full sequence is ATP synthase subunit a (252 aa).

The next 6 membrane-spanning stretches (helical) occupy residues 29–49, 87–107, 116–136, 146–166, 183–205, and 219–239; these read FTNV…FLFI, FFPL…IGLF, QIMI…GYGF, LFVP…IEVI, MLAG…ELGI, and VAIT…FTVL.

This sequence belongs to the ATPase A chain family. F-type ATPases have 2 components, CF(1) - the catalytic core - and CF(0) - the membrane proton channel. CF(1) has five subunits: alpha(3), beta(3), gamma(1), delta(1), epsilon(1). CF(0) has three main subunits: a(1), b(2) and c(9-12). The alpha and beta chains form an alternating ring which encloses part of the gamma chain. CF(1) is attached to CF(0) by a central stalk formed by the gamma and epsilon chains, while a peripheral stalk is formed by the delta and b chains.

It is found in the cell inner membrane. In terms of biological role, key component of the proton channel; it plays a direct role in the translocation of protons across the membrane. This Bartonella quintana (strain Toulouse) (Rochalimaea quintana) protein is ATP synthase subunit a.